Reading from the N-terminus, the 375-residue chain is 23S rRNA (uracil(747)-C(5))-methyltransferase RlmC (375 aa).

The [4Fe-4S] cluster site is built by Cys3, Cys11, Cys14, and Cys87. S-adenosyl-L-methionine contacts are provided by Gln212, Phe241, Glu262, and Asn307. Cys334 (nucleophile) is an active-site residue.

This sequence belongs to the class I-like SAM-binding methyltransferase superfamily. RNA M5U methyltransferase family. RlmC subfamily.

It catalyses the reaction uridine(747) in 23S rRNA + S-adenosyl-L-methionine = 5-methyluridine(747) in 23S rRNA + S-adenosyl-L-homocysteine + H(+). Functionally, catalyzes the formation of 5-methyl-uridine at position 747 (m5U747) in 23S rRNA. The sequence is that of 23S rRNA (uracil(747)-C(5))-methyltransferase RlmC from Escherichia coli O7:K1 (strain IAI39 / ExPEC).